We begin with the raw amino-acid sequence, 62 residues long: Large ribosomal subunit protein uL30 (62 aa).

The protein belongs to the universal ribosomal protein uL30 family. As to quaternary structure, part of the 50S ribosomal subunit.

The sequence is that of Large ribosomal subunit protein uL30 from Polynucleobacter asymbioticus (strain DSM 18221 / CIP 109841 / QLW-P1DMWA-1) (Polynucleobacter necessarius subsp. asymbioticus).